Reading from the N-terminus, the 432-residue chain is 5'-deoxyadenosine deaminase (432 aa).

2 residues coordinate Zn(2+): His63 and His65. Substrate contacts are provided by Glu92 and His184. His211 contributes to the Zn(2+) binding site. Substrate-binding residues include Glu214 and Asp299. Asp299 contributes to the Zn(2+) binding site.

It belongs to the metallo-dependent hydrolases superfamily. MTA/SAH deaminase family. In terms of assembly, homotetramer. The cofactor is Zn(2+).

It carries out the reaction 5'-deoxyadenosine + H2O + H(+) = 5'-deoxyinosine + NH4(+). The enzyme catalyses S-adenosyl-L-homocysteine + H2O + H(+) = S-inosyl-L-homocysteine + NH4(+). The catalysed reaction is S-methyl-5'-thioadenosine + H2O + H(+) = S-methyl-5'-thioinosine + NH4(+). It catalyses the reaction adenosine + H2O + H(+) = inosine + NH4(+). Its pathway is amino-acid biosynthesis; S-adenosyl-L-methionine biosynthesis. Its function is as follows. Catalyzes the deamination of three SAM-derived enzymatic products, namely 5'-deoxyadenosine, S-adenosyl-L-homocysteine, and 5'-methylthioadenosine, to produce the inosine analogs. Can also deaminate adenosine. The preferred substrate for this enzyme is 5'-deoxyadenosine, but all these substrates are efficiently deaminated. Likely functions in a S-adenosyl-L-methionine (SAM) recycling pathway from S-adenosyl-L-homocysteine (SAH) produced from SAM-dependent methylation reactions. May also be involved in the recycling of 5'-deoxyadenosine, whereupon the 5'-deoxyribose moiety of 5'-deoxyinosine is further metabolized to deoxyhexoses used for the biosynthesis of aromatic amino acids in methanogens. In Methanosarcina mazei (strain ATCC BAA-159 / DSM 3647 / Goe1 / Go1 / JCM 11833 / OCM 88) (Methanosarcina frisia), this protein is 5'-deoxyadenosine deaminase.